The chain runs to 336 residues: Large ribosomal subunit protein uL3 (336 aa).

A disordered region spans residues 1–34 (MVRHHQPRKGSVAFSPRKRAAKETPRIKSWPQND).

Belongs to the universal ribosomal protein uL3 family. In terms of assembly, part of the 50S ribosomal subunit. Forms a cluster with proteins L14 and L24e.

In terms of biological role, one of the primary rRNA binding proteins, it binds directly near the 3'-end of the 23S rRNA, where it nucleates assembly of the 50S subunit. This Methanobrevibacter smithii (strain ATCC 35061 / DSM 861 / OCM 144 / PS) protein is Large ribosomal subunit protein uL3.